We begin with the raw amino-acid sequence, 87 residues long: Small ribosomal subunit protein bS21 (87 aa).

Residues 47 to 63 (YEKPSEKRARQKAEAVR) are compositionally biased toward basic and acidic residues. Residues 47–87 (YEKPSEKRARQKAEAVRRARKLARKRAQREGLLPMPKKPGR) are disordered. Basic residues predominate over residues 64-73 (RARKLARKRA).

This sequence belongs to the bacterial ribosomal protein bS21 family.

The protein is Small ribosomal subunit protein bS21 of Caulobacter vibrioides (strain ATCC 19089 / CIP 103742 / CB 15) (Caulobacter crescentus).